The primary structure comprises 247 residues: tRNA (guanine-N(7)-)-methyltransferase (247 aa).

S-adenosyl-L-methionine-binding positions include Gly70, 93–94 (EI), 128–129 (NA), and Leu148. The active site involves Asp151. 226-228 (SEE) serves as a coordination point for S-adenosyl-L-methionine.

Belongs to the class I-like SAM-binding methyltransferase superfamily. TrmB family.

Its subcellular location is the nucleus. The catalysed reaction is guanosine(46) in tRNA + S-adenosyl-L-methionine = N(7)-methylguanosine(46) in tRNA + S-adenosyl-L-homocysteine. It functions in the pathway tRNA modification; N(7)-methylguanine-tRNA biosynthesis. In terms of biological role, catalyzes the formation of N(7)-methylguanine at position 46 (m7G46) in tRNA. This Drosophila virilis (Fruit fly) protein is tRNA (guanine-N(7)-)-methyltransferase.